The sequence spans 338 residues: Aspartate carbamoyltransferase catalytic subunit (338 aa).

Residues arginine 59 and threonine 60 each contribute to the carbamoyl phosphate site. Lysine 87 is an L-aspartate binding site. Residues arginine 109, histidine 142, and glutamine 145 each coordinate carbamoyl phosphate. 2 residues coordinate L-aspartate: arginine 182 and arginine 248. Carbamoyl phosphate-binding residues include glycine 289 and proline 290.

It belongs to the aspartate/ornithine carbamoyltransferase superfamily. ATCase family. As to quaternary structure, heterododecamer (2C3:3R2) of six catalytic PyrB chains organized as two trimers (C3), and six regulatory PyrI chains organized as three dimers (R2).

It carries out the reaction carbamoyl phosphate + L-aspartate = N-carbamoyl-L-aspartate + phosphate + H(+). It participates in pyrimidine metabolism; UMP biosynthesis via de novo pathway; (S)-dihydroorotate from bicarbonate: step 2/3. Catalyzes the condensation of carbamoyl phosphate and aspartate to form carbamoyl aspartate and inorganic phosphate, the committed step in the de novo pyrimidine nucleotide biosynthesis pathway. The polypeptide is Aspartate carbamoyltransferase catalytic subunit (Synechococcus elongatus (strain ATCC 33912 / PCC 7942 / FACHB-805) (Anacystis nidulans R2)).